The sequence spans 323 residues: MATRNRTTVYRKHRDACKSARAPLSLSASDSFGGPVIEMVSGSFSRSNHSSYAPLNSYDPGPSSSDAFTIGMPPAWVDDSEEITFNIQKVRDKMNELAKAHSKALMPTFGDNKGIHREVEMLTHEITDLLRKSEKRLQMLSTRGPSEESNLRKNVQRSLATDLQNLSMELRRKQSTYLKRLQQQKEGQDEVDLEFNVNGKMSRLDEEDELGGMGFDEHQTIKLKEGQHVSAEREREIQQVLGSVNDLAQIMKDLSALVIDQGTIVDRIDYNVQNVSTSVEEGYKQLQKAERTQREGAMVKCATILLVLCLIMIVLLILKNILF.

Residues 1–302 (MATRNRTTVY…QREGAMVKCA (302 aa)) are Cytoplasmic-facing. Residues 227–289 (QHVSAERERE…EEGYKQLQKA (63 aa)) form the t-SNARE coiled-coil homology domain. A helical; Anchor for type IV membrane protein transmembrane segment spans residues 303–323 (TILLVLCLIMIVLLILKNILF).

Belongs to the syntaxin family. In terms of assembly, interacts with VTI12 and SYP61 to form a t-SNARE complex and with VPS45. In terms of tissue distribution, expressed at low levels in roots, stems, flowers and leaves.

It is found in the golgi apparatus. Its subcellular location is the trans-Golgi network membrane. Its function is as follows. Contributes to the regulation of secretory and vacuolar transport pathways in the post-Golgi network, and to the maintenance of the Golgi apparatus and trans-Golgi network (TGN) morphologies. Vesicle trafficking protein that functions in the secretory pathway and mediates liposome fusion. Required for extracellular resistance responses to a fungal pathogen. Also involved in the protection of chloroplasts from salicylic acid-dependent biotic stress. This Arabidopsis thaliana (Mouse-ear cress) protein is Syntaxin-42.